The chain runs to 153 residues: Arginine repressor (153 aa).

Belongs to the ArgR family.

The protein localises to the cytoplasm. It participates in amino-acid biosynthesis; L-arginine biosynthesis [regulation]. Functionally, regulates arginine biosynthesis genes. This Clostridium tetani (strain Massachusetts / E88) protein is Arginine repressor.